Consider the following 617-residue polypeptide: Tetratricopeptide repeat protein 39B (617 aa).

3 TPR repeats span residues 328–361, 520–553, and 561–594; these read SLIL…QEEW, CLVK…EKLL, and PFTL…YKDY.

This sequence belongs to the TTC39 family. High expression in lung and spleen. Low lower expression in liver and small intestine. Weak expression in heart, brain, kidney, adipose, and adrenal gland.

Its function is as follows. Regulates high density lipoprotein (HDL) cholesterol metabolism by promoting the ubiquitination and degradation of the oxysterols receptors LXR (NR1H2 and NR1H3). This Mus musculus (Mouse) protein is Tetratricopeptide repeat protein 39B.